A 633-amino-acid chain; its full sequence is Terminal nucleotidyltransferase 4B (633 aa).

The tract at residues 1–115 (MFRSGERPLG…GGGRADGGGG (115 aa)) is disordered. Residues 25–34 (ETTNNNNNHH) show a composition bias toward polar residues. Composition is skewed to low complexity over residues 36-52 (PAAW…ASPV) and 60-70 (RPAAALPASES). The segment covering 87-98 (ASTYGLNYSLLQ) has biased composition (polar residues). Positions 103–115 (RAAGGGRADGGGG) are enriched in gly residues. Residues D191 and D193 each contribute to the Mg(2+) site. ATP contacts are provided by G254, K279, S297, Y298, N382, and R386. The region spanning 322–382 (NYGVLLIEFF…YIEDPLQPGN (61 aa)) is the PAP-associated domain. Positions 484–633 (LGKCRSNASE…RDAPLSELCR (150 aa)) are disordered. Low complexity predominate over residues 492–519 (SEPLSKHSSNSSSGPVSSSSATQSSSSD). K531 participates in a covalent cross-link: Glycyl lysine isopeptide (Lys-Gly) (interchain with G-Cter in SUMO2). The segment covering 542–552 (RVGSQDVSLEV) has biased composition (polar residues). S545 carries the post-translational modification Phosphoserine. Glycyl lysine isopeptide (Lys-Gly) (interchain with G-Cter in SUMO2) cross-links involve residues K558, K573, and K587. Polar residues predominate over residues 559-614 (MQSTQTTNTPNNANKSQHGSARLFRSSSKGFQGTAQTSHGALMTSKQHQGKSNTQY). The short motif at 618–624 (KKRRHKR) is the Basic, involved in binding of the RNA primer element.

This sequence belongs to the DNA polymerase type-B-like family. Component of a nucleolar TRAMP-like complex, an ATP-dependent exosome regulatory complex consisting of a helicase (MTREX), an oligadenylate polymerase (TENT4B or TENT4A), and a substrate specific RNA-binding factor (ZCCHC7 or ZCCHC8). Several TRAMP-like complexes exist with specific compositions and are associated with nuclear, or nucleolar RNA exosomes. Mg(2+) serves as cofactor. It depends on Mn(2+) as a cofactor.

It localises to the nucleus. The protein localises to the nucleolus. It is found in the cytoplasm. It catalyses the reaction RNA(n) + ATP = RNA(n)-3'-adenine ribonucleotide + diphosphate. Terminal nucleotidyltransferase that catalyzes preferentially the transfer of ATP and GTP on RNA 3' poly(A) tail creating a heterogeneous 3' poly(A) tail leading to mRNAs stabilization by protecting mRNAs from active deadenylation. Also functions as a catalytic subunit of a TRAMP-like complex which has a poly(A) RNA polymerase activity and is involved in a post-transcriptional quality control mechanism. Polyadenylation with short oligo(A) tails is required for the degradative activity of the exosome on several of its nuclear RNA substrates. Doesn't need a cofactor for polyadenylation activity (in vitro). Plays a role in replication-dependent histone mRNA degradation, probably through terminal uridylation of mature histone mRNAs. May play a role in sister chromatid cohesion. This Mus musculus (Mouse) protein is Terminal nucleotidyltransferase 4B.